A 464-amino-acid polypeptide reads, in one-letter code: Properdin (464 aa).

Positions Met-1–Gly-22 are cleaved as a signal peptide. TSP type-1 domains are found at residues Asp-24–Arg-72, Ser-73–Pro-130, Met-132–Pro-187, His-189–Pro-251, Ala-253–Pro-309, Asn-311–Ile-372, and Lys-374–Lys-457. 3 disulfide bridges follow: Cys-28–Cys-52, Cys-39–Cys-68, and Cys-53–Cys-71. Trp-79 and Trp-82 each carry a C-linked (Man) tryptophan glycan. Intrachain disulfides connect Cys-85–Cys-123, Cys-89–Cys-129, Cys-100–Cys-107, Cys-128–Cys-166, Cys-144–Cys-180, Cys-148–Cys-186, and Cys-159–Cys-170. C-linked (Man) tryptophan glycosylation is found at Trp-135, Trp-138, and Trp-141. O-linked (Fuc...) threonine glycosylation is present at Thr-147. Trp-192, Trp-195, and Trp-198 each carry a C-linked (Man) tryptophan glycan. Disulfide bonds link Cys-201–Cys-244, Cys-205–Cys-250, and Cys-220–Cys-234. O-linked (Fuc...) serine glycosylation is present at Ser-204. C-linked (Man) tryptophan glycans are attached at residues Trp-256 and Trp-259. 3 disulfide bridges follow: Cys-265–Cys-302, Cys-269–Cys-308, and Cys-280–Cys-292. An O-linked (Fuc...) threonine glycan is attached at Thr-268. Residues Trp-317 and Trp-320 are each glycosylated (C-linked (Man) tryptophan). Disulfide bonds link Cys-323–Cys-365, Cys-332–Cys-371, and Cys-345–Cys-355. Positions Gly-346 to Pro-354 are interaction with Complement C3 beta chain. C-linked (Man) tryptophan glycans are attached at residues Trp-377, Trp-380, and Trp-383. 3 disulfides stabilise this stretch: Cys-386/Cys-450, Cys-390/Cys-456, and Cys-402/Cys-434. A glycan (N-linked (GlcNAc...) asparagine) is linked at Asn-423.

In terms of assembly, in plasma, properdin exists as dimers, trimers or tetramers in the relative proportions of 26:54:20. Interacts with the pro-C3-convertase enzyme complex (C3b-Bb) comprised of Complement C3 beta chain (C3b) and the Complement factor B Bb fragment (Bb), where it binds (via its TSP type-1 5 domain) with C3b and Bb. This interaction stabilizes the complex and allows it to become the active C3-convertase enzyme complex (C3b-Bb-FP). Interacts with C3b. Interacts with CFB.

Its subcellular location is the secreted. Its function is as follows. A positive regulator of the alternate pathway of complement. It binds to and stabilizes the C3- and C5-convertase enzyme complexes. Inhibits CFI-CFH mediated degradation of Inhibits CFI-CFH mediated degradation of Complement C3 beta chain (C3b). This Mus musculus (Mouse) protein is Properdin (Cfp).